The primary structure comprises 308 residues: Protoheme IX farnesyltransferase (308 aa).

A run of 9 helical transmembrane segments spans residues 31-51 (VGIV…AFYF), 60-80 (LDIV…SCVI), 110-130 (ALWF…MTNL), 131-151 (TAAG…TMWS), 157-177 (VNTI…WTAV), 185-205 (AWVL…ALAI), 232-252 (IIIW…LGLP), 253-273 (IVIL…VGYR), and 285-305 (FVYS…FTLF).

Belongs to the UbiA prenyltransferase family. Protoheme IX farnesyltransferase subfamily. In terms of assembly, interacts with CtaA.

Its subcellular location is the cell membrane. The enzyme catalyses heme b + (2E,6E)-farnesyl diphosphate + H2O = Fe(II)-heme o + diphosphate. It participates in porphyrin-containing compound metabolism; heme O biosynthesis; heme O from protoheme: step 1/1. Its function is as follows. Converts heme B (protoheme IX) to heme O by substitution of the vinyl group on carbon 2 of heme B porphyrin ring with a hydroxyethyl farnesyl side group. This chain is Protoheme IX farnesyltransferase, found in Bacillus licheniformis (strain ATCC 14580 / DSM 13 / JCM 2505 / CCUG 7422 / NBRC 12200 / NCIMB 9375 / NCTC 10341 / NRRL NRS-1264 / Gibson 46).